A 568-amino-acid chain; its full sequence is 2-succinyl-5-enolpyruvyl-6-hydroxy-3-cyclohexene-1-carboxylate synthase (568 aa).

It belongs to the TPP enzyme family. MenD subfamily. Homodimer. It depends on Mg(2+) as a cofactor. Mn(2+) serves as cofactor. Requires thiamine diphosphate as cofactor.

It carries out the reaction isochorismate + 2-oxoglutarate + H(+) = 5-enolpyruvoyl-6-hydroxy-2-succinyl-cyclohex-3-ene-1-carboxylate + CO2. Its pathway is quinol/quinone metabolism; 1,4-dihydroxy-2-naphthoate biosynthesis; 1,4-dihydroxy-2-naphthoate from chorismate: step 2/7. It participates in quinol/quinone metabolism; menaquinone biosynthesis. Its function is as follows. Catalyzes the thiamine diphosphate-dependent decarboxylation of 2-oxoglutarate and the subsequent addition of the resulting succinic semialdehyde-thiamine pyrophosphate anion to isochorismate to yield 2-succinyl-5-enolpyruvyl-6-hydroxy-3-cyclohexene-1-carboxylate (SEPHCHC). The chain is 2-succinyl-5-enolpyruvyl-6-hydroxy-3-cyclohexene-1-carboxylate synthase from Actinobacillus pleuropneumoniae serotype 5b (strain L20).